Reading from the N-terminus, the 282-residue chain is Bifunctional protein FolD (282 aa).

NADP(+) contacts are provided by residues 165–167 (GAS) and I231.

It belongs to the tetrahydrofolate dehydrogenase/cyclohydrolase family. As to quaternary structure, homodimer.

The catalysed reaction is (6R)-5,10-methylene-5,6,7,8-tetrahydrofolate + NADP(+) = (6R)-5,10-methenyltetrahydrofolate + NADPH. It carries out the reaction (6R)-5,10-methenyltetrahydrofolate + H2O = (6R)-10-formyltetrahydrofolate + H(+). The protein operates within one-carbon metabolism; tetrahydrofolate interconversion. Its function is as follows. Catalyzes the oxidation of 5,10-methylenetetrahydrofolate to 5,10-methenyltetrahydrofolate and then the hydrolysis of 5,10-methenyltetrahydrofolate to 10-formyltetrahydrofolate. This chain is Bifunctional protein FolD, found in Francisella tularensis subsp. mediasiatica (strain FSC147).